The following is a 300-amino-acid chain: MNQSYGRLVSRAAIAATAMASLLLLIKIFAWWYTGSVSILAALVDSLVDIGASLTNLLVVRYSLQPADDNHSFGHGKAESLAALAQSMFISGSALFLFLTGIQHLVSPTPMTDPGVGVIVTIVALICTIILVSFQRWVVRRTQSQAVRADMLHYQSDVMMNGAILLALGLSWYGWHRADALFALGIGIYILYSALRMGYEAVQSLLDRALPDEERQEIIDIVTSWPGVSGAHDLRTRQSGPTRFIQIHLEMEDSLPLVQAHMVADQVEQAILRRFPGSDVIIHQDPCSVVPREGKRSMLS.

The next 4 helical transmembrane spans lie at 12 to 32 (AAIA…FAWW), 39 to 59 (ILAA…NLLV), 82 to 102 (AALA…LTGI), and 114 to 134 (PGVG…LVSF). The Zn(2+) site is built by aspartate 45 and aspartate 49. The Zn(2+) site is built by histidine 153 and aspartate 157. 2 helical membrane-spanning segments follow: residues 156-176 (SDVM…YGWH) and 178-198 (ADAL…LRMG).

It belongs to the cation diffusion facilitator (CDF) transporter (TC 2.A.4) family. FieF subfamily. As to quaternary structure, homodimer.

The protein localises to the cell inner membrane. It carries out the reaction Zn(2+)(in) + H(+)(out) = Zn(2+)(out) + H(+)(in). The catalysed reaction is Cd(2+)(in) + H(+)(out) = Cd(2+)(out) + H(+)(in). The enzyme catalyses Fe(2+)(in) + H(+)(out) = Fe(2+)(out) + H(+)(in). In terms of biological role, divalent metal cation transporter which exports Zn(2+), Cd(2+) and possibly Fe(2+). May be involved in zinc and iron detoxification by efflux. This is Cation-efflux pump FieF from Escherichia coli O7:K1 (strain IAI39 / ExPEC).